The sequence spans 578 residues: Arginine--tRNA ligase (578 aa).

The 'HIGH' region signature appears at 123 to 133 (PNIAKEMHVGH).

This sequence belongs to the class-I aminoacyl-tRNA synthetase family. In terms of assembly, monomer.

The protein resides in the cytoplasm. It carries out the reaction tRNA(Arg) + L-arginine + ATP = L-arginyl-tRNA(Arg) + AMP + diphosphate. The sequence is that of Arginine--tRNA ligase from Baumannia cicadellinicola subsp. Homalodisca coagulata.